We begin with the raw amino-acid sequence, 138 residues long: Large ribosomal subunit protein uL14 (138 aa).

It belongs to the universal ribosomal protein uL14 family. In terms of assembly, part of the 50S ribosomal subunit. Forms a cluster with proteins L3 and L24e, part of which may contact the 16S rRNA in 2 intersubunit bridges.

Its function is as follows. Binds to 23S rRNA. Forms part of two intersubunit bridges in the 70S ribosome. The polypeptide is Large ribosomal subunit protein uL14 (Sulfurisphaera tokodaii (strain DSM 16993 / JCM 10545 / NBRC 100140 / 7) (Sulfolobus tokodaii)).